A 50-amino-acid chain; its full sequence is Large ribosomal subunit protein bL32c (50 aa).

The protein belongs to the bacterial ribosomal protein bL32 family.

The protein resides in the plastid. Its subcellular location is the chloroplast. This is Large ribosomal subunit protein bL32c from Lotus japonicus (Lotus corniculatus var. japonicus).